A 604-amino-acid polypeptide reads, in one-letter code: Threonine--tRNA ligase (604 aa).

Residues 209 to 500 (DHRKLGQEMG…LTEHFGGEFP (292 aa)) form a catalytic region. Zn(2+)-binding residues include Cys301, His352, and His477.

Belongs to the class-II aminoacyl-tRNA synthetase family. As to quaternary structure, homodimer. Requires Zn(2+) as cofactor.

The protein resides in the cytoplasm. It carries out the reaction tRNA(Thr) + L-threonine + ATP = L-threonyl-tRNA(Thr) + AMP + diphosphate + H(+). Catalyzes the attachment of threonine to tRNA(Thr) in a two-step reaction: L-threonine is first activated by ATP to form Thr-AMP and then transferred to the acceptor end of tRNA(Thr). Also edits incorrectly charged L-seryl-tRNA(Thr). This chain is Threonine--tRNA ligase, found in Helicobacter hepaticus (strain ATCC 51449 / 3B1).